Reading from the N-terminus, the 227-residue chain is NADH-quinone oxidoreductase subunit C (227 aa).

It belongs to the complex I 30 kDa subunit family. In terms of assembly, NDH-1 is composed of 14 different subunits. Subunits NuoB, C, D, E, F, and G constitute the peripheral sector of the complex.

The protein resides in the cell inner membrane. It carries out the reaction a quinone + NADH + 5 H(+)(in) = a quinol + NAD(+) + 4 H(+)(out). Its function is as follows. NDH-1 shuttles electrons from NADH, via FMN and iron-sulfur (Fe-S) centers, to quinones in the respiratory chain. The immediate electron acceptor for the enzyme in this species is believed to be ubiquinone. Couples the redox reaction to proton translocation (for every two electrons transferred, four hydrogen ions are translocated across the cytoplasmic membrane), and thus conserves the redox energy in a proton gradient. In Legionella pneumophila (strain Corby), this protein is NADH-quinone oxidoreductase subunit C.